A 383-amino-acid chain; its full sequence is Outer membrane protein S2 (383 aa).

Positions 1 to 21 are cleaved as a signal peptide; sequence MKRKVLALVIPALLAAGAAHA.

It belongs to the Gram-negative porin family. Homotrimer.

The protein resides in the cell outer membrane. Functionally, forms pores that allow passive diffusion of small molecules across the outer membrane. This Salmonella typhi protein is Outer membrane protein S2 (ompS2).